Reading from the N-terminus, the 459-residue chain is APSYPRYTREEVGRHRSPEERVWVTHGTDVFDVTDFVELHPGGPDKILLAAGGALEPFWALYAVHGEPHVLELLQQYKVGELSPDEAPAAPDAQDPFAGDPPRHPGLRVNSQKPFNAEPPAELLAERFLTPNELFFTRNHLPVPAVEPSSYRLRVDGPGGRTLSLSLAELRSRFPKHEVTATLQCAGNRRSEMSRVRPVKGLPWDIGAISTARWGGASLRDVLLHAGFPEELQGGEHVCFEGLDADPGGAPYGASIPYGRALSPAADVLLAYEMNGTELPRDHRFPVRVVVPGVVGARSVKWLRRVAVSPDESPSRWQQNDYKGFSPCVDWDTVDYRTAPAIQELPVQSAVTQPRPGAAVPPGELTVKGYAWSGGGREVVRVDVSLDGGRTWKVARLMGDKAPPGRAWAWALWELTVPVEAGTELEIVCKAVDSSYNVQPDSVAPIWNLRGVLSTAWHR.

A Cytochrome b5 heme-binding domain is found at 4–83; it reads YPRYTREEVG…LQQYKVGELS (80 aa). Heme b-binding residues include H40, H65, and H69. Positions 83-115 are disordered; that stretch reads SPDEAPAAPDAQDPFAGDPPRHPGLRVNSQKPF. Residues 85–100 are compositionally biased toward low complexity; sequence DEAPAAPDAQDPFAGD. The hinge stretch occupies residues 86–95; it reads EAPAAPDAQD. Residues 96-323 are moco domain; that stretch reads PFAGDPPRHP…PSRWQQNDYK (228 aa). Residues 136 to 140, C185, D244, H283, R288, and 299 to 301 contribute to the Mo-molybdopterin site; these read FTRNH and SVK. The interval 324–459 is homodimerization; the sequence is GFSPCVDWDT…RGVLSTAWHR (136 aa).

Homodimer. The cofactor is heme b. Mo-molybdopterin serves as cofactor.

It localises to the mitochondrion intermembrane space. It carries out the reaction sulfite + O2 + H2O = sulfate + H2O2. It participates in energy metabolism; sulfur metabolism. Catalyzes the oxidation of sulfite to sulfate, the terminal reaction in the oxidative degradation of sulfur-containing amino acids. The polypeptide is Sulfite oxidase (SUOX) (Gallus gallus (Chicken)).